Consider the following 221-residue polypeptide: MALIDPRAGLSGIAPSSPQARYILPSFIEHSSFGVKESNPYNKLFEERIIFLGVQVDDASANDIMAQLLVLESLDPDRDITMYINSPGGSFTSLMAIYDTMQYVRADVATVCLGQAASAAAVLLAAGTPGKRACLPNARVLIHQPSLEGGIQGQVSDLEIQAAEIERMRRLMETTLARHTGKDPDTIRKDTDRDKILTAEDAKEYGIIDTVFDYRKLSAQK.

Residue Ser-118 is the Nucleophile of the active site. His-143 is an active-site residue.

This sequence belongs to the peptidase S14 family. In terms of assembly, fourteen ClpP subunits assemble into 2 heptameric rings which stack back to back to give a disk-like structure with a central cavity, resembling the structure of eukaryotic proteasomes.

It is found in the cytoplasm. The catalysed reaction is Hydrolysis of proteins to small peptides in the presence of ATP and magnesium. alpha-casein is the usual test substrate. In the absence of ATP, only oligopeptides shorter than five residues are hydrolyzed (such as succinyl-Leu-Tyr-|-NHMec, and Leu-Tyr-Leu-|-Tyr-Trp, in which cleavage of the -Tyr-|-Leu- and -Tyr-|-Trp bonds also occurs).. In terms of biological role, cleaves peptides in various proteins in a process that requires ATP hydrolysis. Has a chymotrypsin-like activity. Plays a major role in the degradation of misfolded proteins. In Nocardia farcinica (strain IFM 10152), this protein is ATP-dependent Clp protease proteolytic subunit 3.